Consider the following 1273-residue polypeptide: Kinesin-like protein KIN-7O (1273 aa).

The region spanning 3-327 (RIHVSVRARP…LQFASRALRV (325 aa)) is the Kinesin motor domain. 79–86 (GQTNSGKT) contributes to the ATP binding site. The stretch at 333 to 408 (VNEILTDAAL…QRERVLQEQA (76 aa)) forms a coiled coil. Residues 452–474 (SEDQSNVLSRGSSLESARSERET) are disordered. A compositionally biased stretch (polar residues) spans 453–467 (EDQSNVLSRGSSLES). 2 coiled-coil regions span residues 602 to 674 (EAIL…ESEV) and 751 to 1023 (VQSS…MEEE).

This sequence belongs to the TRAFAC class myosin-kinesin ATPase superfamily. Kinesin family. KIN-7 subfamily.

In Arabidopsis thaliana (Mouse-ear cress), this protein is Kinesin-like protein KIN-7O.